Here is a 517-residue protein sequence, read N- to C-terminus: Nuclear receptor subfamily 5 group A member 2 (517 aa).

Positions 43 to 118 (DEMCPVCGDK…VGMKLEAVRA (76 aa)) form a DNA-binding region, nuclear receptor. The Zn(2+) site is built by C46, C49, C63, C66, C82, C88, C98, and C101. 2 consecutive NR C4-type zinc fingers follow at residues 46–66 (CPVC…CESC) and 82–101 (CIEN…CPYC). Residues 112–127 (KLEAVRADRMRGGRNK) are C-terminal extension (CTE). The FTZ-F1 box signature appears at 128–147 (FGPMYKRDRALKQQKKALIR). The disordered stretch occupies residues 182–211 (GLPLSHHHHHHHHHHHHSSSSAGLPPADFD). Positions 186 to 199 (SHHHHHHHHHHHHS) are enriched in basic residues. One can recognise an NR LBD domain in the interval 276–515 (SFPHLVVELL…NLLIEMLHAK (240 aa)). A phospholipid derivative-binding positions include 397–400 (GATL), Y492, and K496. An AF-2 region spans residues 504–515 (CNNLLIEMLHAK).

The protein belongs to the nuclear hormone receptor family. NR5 subfamily. Monomer; Binds DNA as a monomer.

Its subcellular location is the nucleus. It localises to the chromosome. Functionally, orphan nuclear receptor that binds DNA as a monomer to the 5'-TCAAGGCCA-3' sequence and controls expression of target genes: regulates key biological processes, such as cholesterol and bile acid synthesis pathways, as well as cartilage, liver and pancreas morphogenesis. Ligand-binding causes conformational change which causes recruitment of coactivators, promoting target gene activation. The specific ligand is unknown, but specific phospholipids, such as phosphatidylethanolamine, phosphatidylserine, dilauroyl phosphatidylcholine and diundecanoyl phosphatidylcholine can act as ligand in vitro. Acts as a pioneer transcription factor, which unwraps target DNA from histones and elicits local opening of closed chromatin. Involved in the formation of connective tissue in lower jaw. Its function is as follows. Lacks transcription factor activity; unable to activate expression of target genes. This Danio rerio (Zebrafish) protein is Nuclear receptor subfamily 5 group A member 2.